A 189-amino-acid chain; its full sequence is UPF0301 protein CCA_00630 (189 aa).

Belongs to the UPF0301 (AlgH) family.

In Chlamydia caviae (strain ATCC VR-813 / DSM 19441 / 03DC25 / GPIC) (Chlamydophila caviae), this protein is UPF0301 protein CCA_00630.